A 346-amino-acid polypeptide reads, in one-letter code: MSGKFINHKTIVFGVITSVLLLLLLIYYVFKPEAQTQNQNINTQTIQPENTVLESATANNKQGKLPTLAASLQGTEIDCPIQVDANGKLILTVGIRSCFDYFFSSLGEKTEAELVADIRQYLLATLPESASNYAIYLLDQYVAYMHALQNLKPNAGFKSNNVDALQKVVDQMAKVQQQFFNAAEINALFGNERNLNQFNLEQMRIHANKNLTTQEKATELAKLIDELPPALADGVRVSMQFAELQQLTKEIQAKGGSAQDLRSMRESLLGPEAADRLEKVDQEEAVWQTQVNQYLSARDQILKSDANDASKQQSIAELRNSSFGTKEDLLRAQSYEVMHDQKSKGS.

Residues 10–30 (TIVFGVITSVLLLLLLIYYVF) form a helical membrane-spanning segment.

The protein belongs to the lipase chaperone family.

Its subcellular location is the cell inner membrane. Functionally, may be involved in the folding of the extracellular lipase during its passage through the periplasm. The chain is Lipase chaperone (lifO) from Acinetobacter venetianus (strain ATCC 31012 / DSM 23050 / BCRC 14357 / CCUG 45561 / CIP 110063 / KCTC 2702 / LMG 19082 / RAG-1).